Reading from the N-terminus, the 138-residue chain is Nucleoside diphosphate kinase (138 aa).

ATP contacts are provided by Lys-9, Phe-57, Arg-85, Thr-91, Arg-102, and Asn-112. The active-site Pros-phosphohistidine intermediate is His-115.

This sequence belongs to the NDK family. It depends on Mg(2+) as a cofactor.

It is found in the cytoplasm. The enzyme catalyses a 2'-deoxyribonucleoside 5'-diphosphate + ATP = a 2'-deoxyribonucleoside 5'-triphosphate + ADP. The catalysed reaction is a ribonucleoside 5'-diphosphate + ATP = a ribonucleoside 5'-triphosphate + ADP. Its function is as follows. Major role in the synthesis of nucleoside triphosphates other than ATP. The ATP gamma phosphate is transferred to the NDP beta phosphate via a ping-pong mechanism, using a phosphorylated active-site intermediate. The protein is Nucleoside diphosphate kinase of Picrophilus torridus (strain ATCC 700027 / DSM 9790 / JCM 10055 / NBRC 100828 / KAW 2/3).